The primary structure comprises 331 residues: Ketol-acid reductoisomerase (NADP(+)) (331 aa).

In terms of domain architecture, KARI N-terminal Rossmann spans A2 to T182. NADP(+)-binding positions include Y25–Q28, S51, S53, and D83–Q86. H108 is a catalytic residue. G134 is a binding site for NADP(+). Residues T183–L328 form the KARI C-terminal knotted domain. Mg(2+) is bound by residues D191, E195, E227, and E231. S252 contacts substrate.

This sequence belongs to the ketol-acid reductoisomerase family. Mg(2+) serves as cofactor.

It carries out the reaction (2R)-2,3-dihydroxy-3-methylbutanoate + NADP(+) = (2S)-2-acetolactate + NADPH + H(+). It catalyses the reaction (2R,3R)-2,3-dihydroxy-3-methylpentanoate + NADP(+) = (S)-2-ethyl-2-hydroxy-3-oxobutanoate + NADPH + H(+). Its pathway is amino-acid biosynthesis; L-isoleucine biosynthesis; L-isoleucine from 2-oxobutanoate: step 2/4. It participates in amino-acid biosynthesis; L-valine biosynthesis; L-valine from pyruvate: step 2/4. Its function is as follows. Involved in the biosynthesis of branched-chain amino acids (BCAA). Catalyzes an alkyl-migration followed by a ketol-acid reduction of (S)-2-acetolactate (S2AL) to yield (R)-2,3-dihydroxy-isovalerate. In the isomerase reaction, S2AL is rearranged via a Mg-dependent methyl migration to produce 3-hydroxy-3-methyl-2-ketobutyrate (HMKB). In the reductase reaction, this 2-ketoacid undergoes a metal-dependent reduction by NADPH to yield (R)-2,3-dihydroxy-isovalerate. This Trichormus variabilis (strain ATCC 29413 / PCC 7937) (Anabaena variabilis) protein is Ketol-acid reductoisomerase (NADP(+)).